A 740-amino-acid chain; its full sequence is D-ornithine 4,5-aminomutase subunit beta (740 aa).

Residues E81, Y160, H182, and 294–296 (RAQ) each bind substrate. Residues 602–739 (PLKIVAATVG…VKKRREMREG (138 aa)) enclose the B12-binding domain. Residues 614 to 616 (EHS) and H615 each bind adenosylcob(III)alamin. N6-(pyridoxal phosphate)lysine is present on K626. Residues 664–669 (STIISH), T700, and S720 each bind adenosylcob(III)alamin.

In terms of assembly, heterotetramer of 2 alpha (OraS) and 2 beta (OraE) subunits. Adenosylcob(III)alamin serves as cofactor. It depends on pyridoxal 5'-phosphate as a cofactor.

It catalyses the reaction D-ornithine = (2R,4S)-2,4-diaminopentanoate. Increased activity in the presence of dithiothreitol (DTT) in vitro. Inhibited by 1 mM potassium phosphate and potassium chloride. Inhibited by L-alpha-ornithine, D,L-alpha-lysine, L-beta-lysine (50%-60%), L-alpha-lysine (26%) and by delta-amino-n-valeric acid to a lesser extent. Significant decrease in activity is observed in the presence of 0.2 mM p-chloromercuribenzoate, N-ethylmaleimide and also by 2 mM iodoacetate to a lesser extent but not inhibited by arsenite. Component of a complex that catalyzes the reversible migration of the omega amino group of D-ornithine to C-4 to form (2R,4S)-2,4-diaminopentanoic acid. OraE may be the catalytic subunit. Active only on D-ornithine and 2,4-diaminopentanoic acid but not active on L-ornithine, L-beta-lysine, L-alpha-lysine or D-alpha-lysine. The polypeptide is D-ornithine 4,5-aminomutase subunit beta (oraE) (Acetoanaerobium sticklandii (strain ATCC 12662 / DSM 519 / JCM 1433 / CCUG 9281 / NCIMB 10654 / HF) (Clostridium sticklandii)).